A 408-amino-acid chain; its full sequence is Energy-coupling factor transporter ATP-binding protein EcfA1 (408 aa).

The 235-residue stretch at I140–D374 folds into the ABC transporter domain. G174–S181 lines the ATP pocket.

Belongs to the ABC transporter superfamily. Energy-coupling factor EcfA family. As to quaternary structure, forms a stable energy-coupling factor (ECF) transporter complex composed of 2 membrane-embedded substrate-binding proteins (S component), 2 ATP-binding proteins (A component) and 2 transmembrane proteins (T component).

The protein localises to the cell membrane. In terms of biological role, ATP-binding (A) component of a common energy-coupling factor (ECF) ABC-transporter complex. Unlike classic ABC transporters this ECF transporter provides the energy necessary to transport a number of different substrates. This Mycoplasma capricolum subsp. capricolum (strain California kid / ATCC 27343 / NCTC 10154) protein is Energy-coupling factor transporter ATP-binding protein EcfA1.